Here is a 346-residue protein sequence, read N- to C-terminus: c-di-GMP synthase (346 aa).

Belongs to the CD-NTase family.

The enzyme catalyses 2 GTP = 3',3'-c-di-GMP + 2 diphosphate. Cyclic nucleotide synthase (second messenger synthase) of a CBASS antivirus system. CBASS (cyclic oligonucleotide-based antiphage signaling system) provides immunity against bacteriophage. The CD-NTase protein synthesizes cyclic nucleotides in response to infection; these serve as specific second messenger signals. The signals activate a diverse range of effectors, leading to bacterial cell death and thus abortive phage infection. A type I-D(GG) CBASS system. Its function is as follows. Cyclic dinucleotide synthase that catalyzes the synthesis of c-di-GMP, has no activity with other NTP substrates. This chain is c-di-GMP synthase, found in Lachnospiraceae bacterium (strain RUG226).